A 356-amino-acid chain; its full sequence is Uroporphyrinogen decarboxylase (356 aa).

Residues 27-31 (RQAGR), D77, Y154, T209, and H327 each bind substrate.

It belongs to the uroporphyrinogen decarboxylase family. Homodimer.

The protein localises to the cytoplasm. It catalyses the reaction uroporphyrinogen III + 4 H(+) = coproporphyrinogen III + 4 CO2. It functions in the pathway porphyrin-containing compound metabolism; protoporphyrin-IX biosynthesis; coproporphyrinogen-III from 5-aminolevulinate: step 4/4. In terms of biological role, catalyzes the decarboxylation of four acetate groups of uroporphyrinogen-III to yield coproporphyrinogen-III. The chain is Uroporphyrinogen decarboxylase from Hamiltonella defensa subsp. Acyrthosiphon pisum (strain 5AT).